Here is a 355-residue protein sequence, read N- to C-terminus: UDP-N-acetylglucosamine--N-acetylmuramyl-(pentapeptide) pyrophosphoryl-undecaprenol N-acetylglucosamine transferase (355 aa).

Residues 15 to 17 (TGG), Asn127, Arg163, Ser191, Ile244, 263 to 268 (ALTVSE), and Gln288 each bind UDP-N-acetyl-alpha-D-glucosamine.

The protein belongs to the glycosyltransferase 28 family. MurG subfamily.

The protein resides in the cell inner membrane. The catalysed reaction is di-trans,octa-cis-undecaprenyl diphospho-N-acetyl-alpha-D-muramoyl-L-alanyl-D-glutamyl-meso-2,6-diaminopimeloyl-D-alanyl-D-alanine + UDP-N-acetyl-alpha-D-glucosamine = di-trans,octa-cis-undecaprenyl diphospho-[N-acetyl-alpha-D-glucosaminyl-(1-&gt;4)]-N-acetyl-alpha-D-muramoyl-L-alanyl-D-glutamyl-meso-2,6-diaminopimeloyl-D-alanyl-D-alanine + UDP + H(+). Its pathway is cell wall biogenesis; peptidoglycan biosynthesis. Cell wall formation. Catalyzes the transfer of a GlcNAc subunit on undecaprenyl-pyrophosphoryl-MurNAc-pentapeptide (lipid intermediate I) to form undecaprenyl-pyrophosphoryl-MurNAc-(pentapeptide)GlcNAc (lipid intermediate II). In Shigella flexneri serotype 5b (strain 8401), this protein is UDP-N-acetylglucosamine--N-acetylmuramyl-(pentapeptide) pyrophosphoryl-undecaprenol N-acetylglucosamine transferase.